Here is a 375-residue protein sequence, read N- to C-terminus: Amylovoran biosynthesis protein AmsC (375 aa).

The next 9 membrane-spanning stretches (helical) occupy residues 2–22 (AIYW…LAMI), 31–51 (KILI…FAGI), 93–113 (MVLA…LLFI), 162–182 (IAFI…FIVL), 208–228 (LPLV…KKLF), 256–276 (VFGL…LYYF), 287–307 (VYIL…FSDF), 309–329 (IFGG…FAFL), and 337–357 (LLNF…NTIL).

Its subcellular location is the cell membrane. Its pathway is glycan metabolism; exopolysaccharide biosynthesis. Involved in the biosynthesis of amylovoran which functions as a virulence factor. The protein is Amylovoran biosynthesis protein AmsC (amsC) of Erwinia amylovora (Fire blight bacteria).